The following is a 251-amino-acid chain: Small ribosomal subunit protein uS2 (251 aa).

It belongs to the universal ribosomal protein uS2 family.

The chain is Small ribosomal subunit protein uS2 from Synechococcus sp. (strain ATCC 27144 / PCC 6301 / SAUG 1402/1) (Anacystis nidulans).